A 156-amino-acid polypeptide reads, in one-letter code: Transcriptional regulator MraZ (156 aa).

2 SpoVT-AbrB domains span residues 5–51 (TFEK…GKAL) and 80–123 (MAKL…SREA).

It belongs to the MraZ family. Forms oligomers.

Its subcellular location is the cytoplasm. The protein resides in the nucleoid. The protein is Transcriptional regulator MraZ of Caulobacter vibrioides (strain ATCC 19089 / CIP 103742 / CB 15) (Caulobacter crescentus).